The following is a 138-amino-acid chain: ATP synthase epsilon chain (138 aa).

This sequence belongs to the ATPase epsilon chain family. In terms of assembly, F-type ATPases have 2 components, CF(1) - the catalytic core - and CF(0) - the membrane proton channel. CF(1) has five subunits: alpha(3), beta(3), gamma(1), delta(1), epsilon(1). CF(0) has three main subunits: a, b and c.

It is found in the cell inner membrane. In terms of biological role, produces ATP from ADP in the presence of a proton gradient across the membrane. This is ATP synthase epsilon chain from Trichlorobacter lovleyi (strain ATCC BAA-1151 / DSM 17278 / SZ) (Geobacter lovleyi).